The sequence spans 971 residues: Lon protease homolog, mitochondrial (971 aa).

The N-terminal 55 residues, 1–55, are a transit peptide targeting the mitochondrion; the sequence is MYRAGAVLLRGATRTRLLAAASAHQSFATFSQRNQSILMMKSMELAGNSGERRFY. The Lon N-terminal domain maps to 89-359; that stretch reads VPMLAINRYP…IALLLIQKEK (271 aa). Residues 190 to 255 are disordered; it reads TPKNETPLNG…PPSATGEKQK (66 aa). The span at 214-224 shows a compositional bias: pro residues; sequence LTPPPSPPPLA. 512–519 serves as a coordination point for ATP; sequence GPPGVGKT. The tract at residues 718–749 is disordered; sequence AEQQNEDEEPAEKATTAITENSEAEPITSTSS. Residues 733 to 749 show a composition bias toward polar residues; sequence TAITENSEAEPITSTSS. Residues 784–971 enclose the Lon proteolytic domain; that stretch reads VTPPGVIMGL…YDELYEHLFQ (188 aa). Catalysis depends on residues Ser-878 and Lys-921.

This sequence belongs to the peptidase S16 family. In terms of assembly, homohexamer or homoheptamer. Organized in a ring with a central cavity.

The protein resides in the mitochondrion matrix. The catalysed reaction is Hydrolysis of proteins in presence of ATP.. Functionally, ATP-dependent serine protease that mediates the selective degradation of misfolded, unassembled or oxidatively damaged polypeptides as well as certain short-lived regulatory proteins in the mitochondrial matrix. May also have a chaperone function in the assembly of inner membrane protein complexes. Participates in the regulation of mitochondrial gene expression and in the maintenance of the integrity of the mitochondrial genome. Binds to mitochondrial DNA in a site-specific manner. Involved in the degradation of transcription factor atfs-1 in the mitochondrion. This Caenorhabditis elegans protein is Lon protease homolog, mitochondrial.